Reading from the N-terminus, the 942-residue chain is Protein inturned (942 aa).

Residues 1–13 show a composition bias toward basic and acidic residues; it reads MADPARRDPRGRA. 2 disordered regions span residues 1–54 and 129–150; these read MADP…LEPE and PKRHHKKKSSNTGPVSILKHQS. The segment covering 22–32 has biased composition (acidic residues); that stretch reads SQEEEEEESDS. The segment covering 33–48 has biased composition (low complexity); it reads DAGASSLGSCSSASSD. Over residues 138–150 the composition is skewed to polar residues; sequence SNTGPVSILKHQS. The region spanning 189–267 is the PDZ domain; that stretch reads LVGVIHQTKW…PMQVKLTFEN (79 aa). Residues S674 and S678 each carry the phosphoserine modification. A disordered region spans residues 707-752; sequence KARKPSPSRIGGGREPGEGEENVGLSPHTTPDTVRKQRESEGSDDN.

The protein belongs to the inturned family. Component of the CPLANE (ciliogenesis and planar polarity effectors) complex, composed of INTU, FUZ and WDPCP. Interacts with CPLANE1. Interacts with NPHP4 and DAAM1; INTU is mediating the interaction between NPHP4 and DAAM1.

The protein resides in the cytoplasm. Its subcellular location is the cell surface. The protein localises to the cytoskeleton. It localises to the cilium basal body. It is found in the microtubule organizing center. The protein resides in the centrosome. Its subcellular location is the centriole. Its function is as follows. Plays a key role in ciliogenesis and embryonic development. Regulator of cilia formation by controlling the organization of the apical actin cytoskeleton and the positioning of the basal bodies at the apical cell surface, which in turn is essential for the normal orientation of elongating ciliary microtubules. Plays a key role in definition of cell polarity via its role in ciliogenesis but not via conversion extension. Has an indirect effect on hedgehog signaling. Proposed to function as core component of the CPLANE (ciliogenesis and planar polarity effectors) complex involved in the recruitment of peripheral IFT-A proteins to basal bodies. Required for recruitment of CPLANE2 to the mother centriole. Binds phosphatidylinositol 3-phosphate with highest affinity, followed by phosphatidylinositol 4-phosphate and phosphatidylinositol 5-phosphate. This is Protein inturned (Intu) from Rattus norvegicus (Rat).